A 215-amino-acid polypeptide reads, in one-letter code: MSHVLGFRELGRMDYEPVWHAMQRFTNERGTSAEDEIWLVEHPPVFTQGQAGKAEHLLLPGDIPVVQVDRGGQVTYHGPGQLVAYLLLDVRKLGFGVRDLVSRMEACLIELLASYGVTAAAKPDAPGVYVDGAKIASLGLRIRHGCSFHGLALNVDMDLAPFRRINPCGYAGLAMTQLSDHATPIKFAEVSARLRAQLVKHLDYAEQTTLTGGID.

A BPL/LPL catalytic domain is found at 31–206 (TSAEDEIWLV…QLVKHLDYAE (176 aa)). Substrate is bound by residues 70–77 (RGGQVTYH), 137–139 (SLG), and 150–152 (GLA). The active-site Acyl-thioester intermediate is Cys168.

This sequence belongs to the LipB family.

The protein resides in the cytoplasm. The enzyme catalyses octanoyl-[ACP] + L-lysyl-[protein] = N(6)-octanoyl-L-lysyl-[protein] + holo-[ACP] + H(+). It functions in the pathway protein modification; protein lipoylation via endogenous pathway; protein N(6)-(lipoyl)lysine from octanoyl-[acyl-carrier-protein]: step 1/2. Functionally, catalyzes the transfer of endogenously produced octanoic acid from octanoyl-acyl-carrier-protein onto the lipoyl domains of lipoate-dependent enzymes. Lipoyl-ACP can also act as a substrate although octanoyl-ACP is likely to be the physiological substrate. This is Octanoyltransferase from Pseudomonas fluorescens (strain SBW25).